We begin with the raw amino-acid sequence, 352 residues long: Thrombopoietin (352 aa).

Positions 1–23 (MELTELLLVVMLLLTARLDPCLP) are cleaved as a signal peptide. 2 cysteine pairs are disulfide-bonded: C28–C172 and C50–C106. N-linked (GlcNAc...) asparagine glycans are attached at residues N185, N197, N206, N234, and N255. The span at 233–245 (LNQTSRSLNQTPG) shows a compositional bias: polar residues. Disordered stretches follow at residues 233-259 (LNQTSRSLNQTPGHLSRTHGPLNGTHG) and 292-352 (YSPS…SQEE). The segment covering 311 to 327 (PTSPTPQNPLQPPPPDP) has biased composition (pro residues). 2 N-linked (GlcNAc...) asparagine glycosylation sites follow: N332 and N347.

This sequence belongs to the EPO/TPO family.

The protein localises to the secreted. Functionally, lineage-specific cytokine affecting the proliferation and maturation of megakaryocytes from their committed progenitor cells. It acts at a late stage of megakaryocyte development. It may be the major physiological regulator of circulating platelets. The sequence is that of Thrombopoietin (THPO) from Canis lupus familiaris (Dog).